Here is a 263-residue protein sequence, read N- to C-terminus: Small ribosomal subunit protein bS1c (263 aa).

S1 motif domains lie at 27-96, 114-178, and 192-260; these read GDIV…LSIR, DSLL…LSHR, and GNII…LSMK.

It belongs to the bacterial ribosomal protein bS1 family.

It localises to the plastid. The protein localises to the chloroplast. The chain is Small ribosomal subunit protein bS1c (rps1) from Pyropia yezoensis (Susabi-nori).